A 409-amino-acid polypeptide reads, in one-letter code: Broad specificity amino-acid racemase (409 aa).

The first 25 residues, 1–25, serve as a signal peptide directing secretion; that stretch reads MRLKKTLLSIAIAAATFTPAMHSIA. A disulfide bridge links C72 with C98. Catalysis depends on K76, which acts as the Proton acceptor. N6-(pyridoxal phosphate)lysine is present on K76. R175 is a binding site for substrate. Y301 functions as the Proton acceptor in the catalytic mechanism. Substrate is bound at residue M349.

This sequence belongs to the alanine racemase family. Bsr subfamily. The cofactor is pyridoxal 5'-phosphate.

It localises to the periplasm. The catalysed reaction is an L-alpha-amino acid = a D-alpha-amino acid. It catalyses the reaction L-lysine = D-lysine. It carries out the reaction L-arginine = D-arginine. In terms of biological role, amino-acid racemase able to utilize a broad range of substrates. The protein is Broad specificity amino-acid racemase of Vibrio parahaemolyticus serotype O3:K6 (strain RIMD 2210633).